Here is a 373-residue protein sequence, read N- to C-terminus: Histidinol-phosphate aminotransferase (373 aa).

Position 230 is an N6-(pyridoxal phosphate)lysine (lysine 230).

The protein belongs to the class-II pyridoxal-phosphate-dependent aminotransferase family. Histidinol-phosphate aminotransferase subfamily. As to quaternary structure, homodimer. Pyridoxal 5'-phosphate is required as a cofactor.

The enzyme catalyses L-histidinol phosphate + 2-oxoglutarate = 3-(imidazol-4-yl)-2-oxopropyl phosphate + L-glutamate. Its pathway is amino-acid biosynthesis; L-histidine biosynthesis; L-histidine from 5-phospho-alpha-D-ribose 1-diphosphate: step 7/9. The protein is Histidinol-phosphate aminotransferase of Synechococcus elongatus (strain ATCC 33912 / PCC 7942 / FACHB-805) (Anacystis nidulans R2).